The chain runs to 201 residues: TATA-box-binding protein 2 (201 aa).

Tandem repeats lie at residues 26 to 102 and 116 to 193.

This sequence belongs to the TBP family. As to quaternary structure, belongs to the TFIID complex together with the TBP-associated factors (TAFs). Binds DNA as monomer.

The protein localises to the nucleus. In terms of biological role, general transcription factor that functions at the core of the DNA-binding multiprotein factor TFIID. Binding of TFIID to the TATA box is the initial transcriptional step of the pre-initiation complex (PIC), playing a role in the activation of eukaryotic genes transcribed by RNA polymerase II. This is TATA-box-binding protein 2 (TBP2) from Triticum aestivum (Wheat).